We begin with the raw amino-acid sequence, 153 residues long: ORM1-like protein 2 (153 aa).

Residues 1 to 21 are Cytoplasmic-facing; that stretch reads MNVGVAHSEVNPNTRVMNSRG. Helical transmembrane passes span 22 to 42 and 43 to 63; these read IWLAYIILVGLLHMVLLSIPF and FSIPVVWTLTNVIHNLATYVF. The Cytoplasmic segment spans residues 64-105; it reads LHTVKGTPFETPDQGKARLLTHWEQMDYGLQFTSSRKFLSIS. A helical membrane pass occupies residues 106–126; the sequence is PIVLYLLASFYTKYDAAHFLI. The Extracellular segment spans residues 127-153; sequence NTASLLSVLLPKLPQFHGVRVFGINKY.

This sequence belongs to the ORM family. As to quaternary structure, ceramide-sensitive subunit of the serine palmitoyltransferase (SPT) complex, which is also composed of SPTLC1, SPTLC2/3 and SPTSSA/B. Widely expressed. Expressed in adult and fetal heart, brain, lung, liver, skeletal muscle and kidney. Expressed in adult pancreas and placenta and in fetal spleen abd thymus.

It localises to the endoplasmic reticulum membrane. Functionally, plays an essential role in the homeostatic regulation of sphingolipid de novo biosynthesis by modulating the activity of the serine palmitoyltransferase (SPT) in response to ceramide levels. When complexed to SPT, the binding of ceramides to its N-terminus stabilizes a conformation that block SPT substrate entry, hence preventing SPT catalytic activity. Through this mechanism, maintains ceramide levels at sufficient concentrations for the production of complex sphingolipids, but which prevents the accumulation of ceramides to levels that trigger apoptosis. In Homo sapiens (Human), this protein is ORM1-like protein 2 (ORMDL2).